A 910-amino-acid chain; its full sequence is DNA mismatch repair protein MutS (910 aa).

Basic and acidic residues predominate over residues 1–11; it reads MEAKVEEKEPE. The interval 1–21 is disordered; sequence MEAKVEEKEPEPVENAGPDAP. ATP is bound at residue 658-665; the sequence is GPNMGGKS.

Belongs to the DNA mismatch repair MutS family.

Its function is as follows. This protein is involved in the repair of mismatches in DNA. It is possible that it carries out the mismatch recognition step. This protein has a weak ATPase activity. The polypeptide is DNA mismatch repair protein MutS (Brucella abortus (strain 2308)).